The chain runs to 691 residues: Elongation factor G (691 aa).

Residues 8 to 282 (ERVRNIGIAA…AVVDYLPAPI (275 aa)) enclose the tr-type G domain. Residues 17 to 24 (AHIDAGKT), 81 to 85 (DTPGH), and 135 to 138 (NKMD) contribute to the GTP site.

Belongs to the TRAFAC class translation factor GTPase superfamily. Classic translation factor GTPase family. EF-G/EF-2 subfamily.

It is found in the cytoplasm. In terms of biological role, catalyzes the GTP-dependent ribosomal translocation step during translation elongation. During this step, the ribosome changes from the pre-translocational (PRE) to the post-translocational (POST) state as the newly formed A-site-bound peptidyl-tRNA and P-site-bound deacylated tRNA move to the P and E sites, respectively. Catalyzes the coordinated movement of the two tRNA molecules, the mRNA and conformational changes in the ribosome. The sequence is that of Elongation factor G from Synechococcus sp. (strain CC9902).